The chain runs to 461 residues: UDP-N-acetylmuramate--L-alanine ligase (461 aa).

Position 111–117 (Gly-111–Thr-117) interacts with ATP.

The protein belongs to the MurCDEF family.

The protein resides in the cytoplasm. It carries out the reaction UDP-N-acetyl-alpha-D-muramate + L-alanine + ATP = UDP-N-acetyl-alpha-D-muramoyl-L-alanine + ADP + phosphate + H(+). It participates in cell wall biogenesis; peptidoglycan biosynthesis. Cell wall formation. The protein is UDP-N-acetylmuramate--L-alanine ligase of Pelotomaculum thermopropionicum (strain DSM 13744 / JCM 10971 / SI).